Here is a 682-residue protein sequence, read N- to C-terminus: Potassium-transporting ATPase ATP-binding subunit (682 aa).

The next 4 helical transmembrane spans lie at 34–54, 58–78, 219–239, and 254–274; these read PVMF…LAMV, IAGS…TVLF, IALT…TATL, and VLVA…LSAI. The 4-aspartylphosphate intermediate role is filled by D307. ATP contacts are provided by residues D344, E348, 377–384, and K395; that span reads FTAQSRMS. D518 and D522 together coordinate Mg(2+). 3 helical membrane-spanning segments follow: residues 588–608, 616–636, and 662–682; these read FAII…LNVM, AILS…PLAL, and LVVP…LGLA.

The protein belongs to the cation transport ATPase (P-type) (TC 3.A.3) family. Type IA subfamily. In terms of assembly, the system is composed of three essential subunits: KdpA, KdpB and KdpC.

Its subcellular location is the cell inner membrane. It catalyses the reaction K(+)(out) + ATP + H2O = K(+)(in) + ADP + phosphate + H(+). Functionally, part of the high-affinity ATP-driven potassium transport (or Kdp) system, which catalyzes the hydrolysis of ATP coupled with the electrogenic transport of potassium into the cytoplasm. This subunit is responsible for energy coupling to the transport system and for the release of the potassium ions to the cytoplasm. This chain is Potassium-transporting ATPase ATP-binding subunit, found in Salmonella choleraesuis (strain SC-B67).